The following is a 367-amino-acid chain: MTNQDVVVSEMGIAAGAALPGGPAGPAGGLFACRSAAASMRQTYLDLAAAAVAARSASCTSWADAMRASSPTRSSRSASDVDEFTAWVRKHPSALSKFEEIAAKSRGKKIVMFMDYDGTLSPIVADPDTAYMSDAMRAAVREVAKTFPTAIVSGRCRDKVRNFVGLSDLYYAGSHGMDIKGPSSNPESALCQPASEFLPMIDEVYKTLVEKTKSTPGAKVENNKFCLSVHFRCVDEKRWNALGEQVKAVIKEYPKLKLTQGRKVLEIRPSIEWDKGKALEFLLESLGFANCGDVMPVYIGDDRTDEDAFKVLRKRGQGLGILVSKCPKDTNASYSLQDPTEVMEFLLRLVEWKRKSSSSSLMIRPRV.

It belongs to the trehalose phosphatase family. It depends on a divalent metal cation as a cofactor.

It carries out the reaction alpha,alpha-trehalose 6-phosphate + H2O = alpha,alpha-trehalose + phosphate. It functions in the pathway glycan biosynthesis; trehalose biosynthesis. In terms of biological role, removes the phosphate from trehalose 6-phosphate to produce free trehalose. Trehalose accumulation in plant may improve abiotic stress tolerance. In Oryza sativa subsp. japonica (Rice), this protein is Probable trehalose-phosphate phosphatase 4 (TPP4).